The primary structure comprises 396 residues: N-terminal EF-hand calcium-binding protein 3 (396 aa).

Over residues 14–34 (PPAPQPQPQTPRHPQLAPDPG) the composition is skewed to pro residues. The tract at residues 14–36 (PPAPQPQPQTPRHPQLAPDPGPA) is disordered. Residues 36–71 (AGHTLFQDVFRRADKNDDGKLSFEEFQNYFADGVLS) enclose the EF-hand domain. Ca(2+) is bound by residues D49, N51, D53, K55, and E60. Residues 181–190 (VEAQSRLCGS) form a required for interaction with APBA3 region. The disordered stretch occupies residues 197 to 220 (ALRSVSRSSTWSPGSSDTGRSSEA). Polar residues predominate over residues 206 to 217 (TWSPGSSDTGRS). Residues 296–385 (LMAQRQVQVA…RAPDTLTTVF (90 aa)) enclose the ABM domain.

In terms of assembly, interacts with the N-terminal domain of APBA2. Interacts with NEK2. Interacts with APBA3; APBA3 seems to mediate the interaction between NECAB3 and HIF1AN. Phosphorylated by NEK2. As to expression, strongly expressed in heart and skeletal muscle, moderately in brain and pancreas.

Its subcellular location is the golgi apparatus. In terms of biological role, inhibits the interaction of APBA2 with amyloid-beta precursor protein (APP), and hence allows formation of amyloid-beta. May enhance the activity of HIF1A and thus promote glycolysis under normoxic conditions; the function requires its ABM domain and may implicate the stabilization of the interaction between HIF1AN and APBA3. This Homo sapiens (Human) protein is N-terminal EF-hand calcium-binding protein 3 (NECAB3).